The primary structure comprises 438 residues: Aspartate--tRNA(Asp) ligase (438 aa).

Glu170 is a binding site for L-aspartate. An aspartate region spans residues 192–195 (QLYK). L-aspartate is bound at residue Arg214. ATP is bound by residues 214-216 (RAE), 222-224 (RHL), and Glu361. The Mg(2+) site is built by Glu361 and Ser364. 2 residues coordinate L-aspartate: Ser364 and Arg368. Residue 409–412 (GAER) participates in ATP binding.

The protein belongs to the class-II aminoacyl-tRNA synthetase family. Type 2 subfamily. In terms of assembly, homodimer. Requires Mg(2+) as cofactor.

Its subcellular location is the cytoplasm. The catalysed reaction is tRNA(Asp) + L-aspartate + ATP = L-aspartyl-tRNA(Asp) + AMP + diphosphate. Catalyzes the attachment of L-aspartate to tRNA(Asp) in a two-step reaction: L-aspartate is first activated by ATP to form Asp-AMP and then transferred to the acceptor end of tRNA(Asp). This Pyrococcus abyssi (strain GE5 / Orsay) protein is Aspartate--tRNA(Asp) ligase.